The chain runs to 317 residues: Methionyl-tRNA formyltransferase (317 aa).

110 to 113 (SLLP) contacts (6S)-5,6,7,8-tetrahydrofolate.

Belongs to the Fmt family.

It carries out the reaction L-methionyl-tRNA(fMet) + (6R)-10-formyltetrahydrofolate = N-formyl-L-methionyl-tRNA(fMet) + (6S)-5,6,7,8-tetrahydrofolate + H(+). Functionally, attaches a formyl group to the free amino group of methionyl-tRNA(fMet). The formyl group appears to play a dual role in the initiator identity of N-formylmethionyl-tRNA by promoting its recognition by IF2 and preventing the misappropriation of this tRNA by the elongation apparatus. The sequence is that of Methionyl-tRNA formyltransferase from Bacillus pumilus (strain SAFR-032).